A 396-amino-acid polypeptide reads, in one-letter code: Elongation factor Tu 2 (396 aa).

One can recognise a tr-type G domain in the interval 10-206; it reads KLHVNVGTIG…ALDTFIPDPT (197 aa). The G1 stretch occupies residues 19–26; sequence GHVDHGKT. 19-26 serves as a coordination point for GTP; the sequence is GHVDHGKT. Thr26 lines the Mg(2+) pocket. Residues 60 to 64 form a G2 region; it reads GITIS. Residues 81–84 are G3; that stretch reads DCPG. Residues 81 to 85 and 136 to 139 contribute to the GTP site; these read DCPGH and NKAD. A G4 region spans residues 136-139; sequence NKAD. The G5 stretch occupies residues 174-176; it reads SAR.

This sequence belongs to the TRAFAC class translation factor GTPase superfamily. Classic translation factor GTPase family. EF-Tu/EF-1A subfamily. As to quaternary structure, monomer.

Its subcellular location is the cytoplasm. It carries out the reaction GTP + H2O = GDP + phosphate + H(+). Functionally, GTP hydrolase that promotes the GTP-dependent binding of aminoacyl-tRNA to the A-site of ribosomes during protein biosynthesis. This is Elongation factor Tu 2 from Xanthomonas campestris pv. campestris (strain 8004).